Reading from the N-terminus, the 147-residue chain is Delta-latroinsectotoxin-Lhe1a (147 aa).

ANK repeat units lie at residues 57–59 (VSI), 66–78 (NNWT…IYFK), 79–96 (KNPA…DIEA), and 98–125 (TSIM…TLDE).

This sequence belongs to the cationic peptide 01 (latrotoxin) family. 04 (delta-latroinsectotoxin) subfamily. Homotetramer in membrane. As to expression, expressed by the venom gland.

The protein localises to the secreted. The protein resides in the target cell membrane. Insecticidal presynaptic neurotoxin that induces massive neurotransmitter release at insect (but not vertebrate) neuromuscular junctions. Native toxin forms cation-permeable pores (with high permeability to calcium) in lipid membranes locust muscle membrane and artificial lipid bilayers. May bind to insect neurexin-1 homolog, insect adhesion G protein-coupled receptor L1 homolog, and insect receptor-type tyrosine-protein phosphatase S homolog, and induces neurotransmitter exocytosis both by forming tetrameric pores in membranes and signaling via G protein-coupled receptor. Oligomerization is a process independent of divalent cations. The chain is Delta-latroinsectotoxin-Lhe1a from Latrodectus hesperus (Western black widow spider).